The primary structure comprises 570 residues: Dihydroxy-acid dehydratase 2 (570 aa).

Cys51 contributes to the [2Fe-2S] cluster binding site. Asp83 serves as a coordination point for Mg(2+). Cys124 is a [2Fe-2S] cluster binding site. Mg(2+)-binding residues include Asp125 and Lys126. Lys126 bears the N6-carboxylysine mark. [2Fe-2S] cluster is bound at residue Cys196. A Mg(2+)-binding site is contributed by Glu446. Residue Ser472 is the Proton acceptor of the active site.

This sequence belongs to the IlvD/Edd family. As to quaternary structure, homodimer. Requires [2Fe-2S] cluster as cofactor. It depends on Mg(2+) as a cofactor.

The enzyme catalyses (2R)-2,3-dihydroxy-3-methylbutanoate = 3-methyl-2-oxobutanoate + H2O. The catalysed reaction is (2R,3R)-2,3-dihydroxy-3-methylpentanoate = (S)-3-methyl-2-oxopentanoate + H2O. It functions in the pathway amino-acid biosynthesis; L-isoleucine biosynthesis; L-isoleucine from 2-oxobutanoate: step 3/4. It participates in amino-acid biosynthesis; L-valine biosynthesis; L-valine from pyruvate: step 3/4. Its function is as follows. Functions in the biosynthesis of branched-chain amino acids. Catalyzes the dehydration of (2R,3R)-2,3-dihydroxy-3-methylpentanoate (2,3-dihydroxy-3-methylvalerate) into 2-oxo-3-methylpentanoate (2-oxo-3-methylvalerate) and of (2R)-2,3-dihydroxy-3-methylbutanoate (2,3-dihydroxyisovalerate) into 2-oxo-3-methylbutanoate (2-oxoisovalerate), the penultimate precursor to L-isoleucine and L-valine, respectively. In Bordetella bronchiseptica (strain ATCC BAA-588 / NCTC 13252 / RB50) (Alcaligenes bronchisepticus), this protein is Dihydroxy-acid dehydratase 2.